The primary structure comprises 444 residues: COP9 signalosome complex subunit 2 (444 aa).

Positions 1–31 (MSDNDDDFMCDDDEDYGLEYSEDSNSEPDVD) are disordered. The PCI domain occupies 255–417 (AHTDFFEAFK…QVLQLDKINS (163 aa)).

This sequence belongs to the CSN2 family. Component of the CSN complex, probably composed of CSN1b, alien/CSN2, CSN3, CSN4, CSN5, CSN6, CSN7 and CSN8. Interacts with Rpn6. In terms of tissue distribution, expressed during embryonic stages 11-14 in the muscle attachment sites (apodemes); pharynx attachment to the roof of the mouth and in the epidermis of the head for the dorsal and ventral prothoracic pharyngeal muscle attachment. From stage 16 onwards expression is seen in all thoracic and abdominal apodemes.

Its subcellular location is the cytoplasm. The protein resides in the nucleus. Functionally, component of the COP9 signalosome complex (CSN), a complex involved in various cellular and developmental processes. The CSN complex is an essential regulator of the ubiquitin (Ubl) conjugation pathway by mediating the deneddylation of the cullin subunits of the SCF-type E3 ligase complexes, leading to decrease the Ubl ligase activity of SCF. The CSN complex plays an essential role in oogenesis and embryogenesis and is required for proper photoreceptor R cell differentiation and promote lamina glial cell migration or axon targeting. It also promotes Ubl-dependent degradation of cyclin E (CycE) during early oogenesis. This Drosophila melanogaster (Fruit fly) protein is COP9 signalosome complex subunit 2.